A 498-amino-acid chain; its full sequence is Glycerol kinase (498 aa).

Thr12 provides a ligand contact to ADP. ATP contacts are provided by Thr12, Thr13, and Ser14. A sn-glycerol 3-phosphate-binding site is contributed by Thr12. Arg16 contributes to the ADP binding site. Sn-glycerol 3-phosphate is bound by residues Arg82, Glu83, Tyr134, and Asp243. Glycerol contacts are provided by Arg82, Glu83, Tyr134, Asp243, and Gln244. Residues Thr265 and Gly308 each contribute to the ADP site. The ATP site is built by Thr265, Gly308, Gln312, and Gly409. ADP-binding residues include Gly409 and Asn413.

It belongs to the FGGY kinase family. As to quaternary structure, homotetramer and homodimer (in equilibrium).

It catalyses the reaction glycerol + ATP = sn-glycerol 3-phosphate + ADP + H(+). It participates in polyol metabolism; glycerol degradation via glycerol kinase pathway; sn-glycerol 3-phosphate from glycerol: step 1/1. With respect to regulation, activated by phosphorylation and inhibited by fructose 1,6-bisphosphate (FBP). Functionally, key enzyme in the regulation of glycerol uptake and metabolism. Catalyzes the phosphorylation of glycerol to yield sn-glycerol 3-phosphate. The sequence is that of Glycerol kinase from Clostridium botulinum (strain 657 / Type Ba4).